Consider the following 354-residue polypeptide: MSAVNPAGGDIAAGRSWPEVLNGLLDGRDQSADDTAWAMDRIMRGEATDAQIAGFLVALRAKGETVEEISGLVRAMYEHANLIEVPGATVDIVGTGGDGAKTVNISTMSSIVVAGTGAKVVKHGNRAASSASGSSDVLEKLGINLQLTPKRVAEVAEEAGITICFAVKFHPALRHVAAARGQLGIRTTFNVLGPLTNPARVKAQAVGVADPRMAPIVAGVFAERGNSSLVFRGDDGLDELTTTSTSRVWVVREGKVTEESFDPRDVGLDLVPVEALRGADAAYNADVARRLLNGETGPVRDAVLLNSAAALVALSPGAGTLAEQLRAGMAQAAEAIDSGAAKRALERWVAASNA.

5-phospho-alpha-D-ribose 1-diphosphate-binding positions include G94, 97–98 (GD), T102, 104–107 (NIST), 122–130 (KHGNRAASS), and S134. Residue G94 participates in anthranilate binding. S106 contributes to the Mg(2+) binding site. Anthranilate is bound at residue N125. R180 is an anthranilate binding site. Residues D238 and E239 each contribute to the Mg(2+) site.

It belongs to the anthranilate phosphoribosyltransferase family. In terms of assembly, homodimer. It depends on Mg(2+) as a cofactor.

The enzyme catalyses N-(5-phospho-beta-D-ribosyl)anthranilate + diphosphate = 5-phospho-alpha-D-ribose 1-diphosphate + anthranilate. The protein operates within amino-acid biosynthesis; L-tryptophan biosynthesis; L-tryptophan from chorismate: step 2/5. Functionally, catalyzes the transfer of the phosphoribosyl group of 5-phosphorylribose-1-pyrophosphate (PRPP) to anthranilate to yield N-(5'-phosphoribosyl)-anthranilate (PRA). The chain is Anthranilate phosphoribosyltransferase from Streptomyces avermitilis (strain ATCC 31267 / DSM 46492 / JCM 5070 / NBRC 14893 / NCIMB 12804 / NRRL 8165 / MA-4680).